We begin with the raw amino-acid sequence, 1979 residues long: Myosin-11 (1979 aa).

Blocked amino end (Ser) is present on serine 2. The Myosin N-terminal SH3-like domain maps to 30–80 (SAKKLVWVPSEKHGFEAASIKEEKGDEVTVELQENGKKVTLSKDDIQKMNP). Residues 84-789 (SKVEDMAELT…VLAHLEEERD (706 aa)) enclose the Myosin motor domain. Lysine 128 carries the N6,N6,N6-trimethyllysine modification. 177 to 184 (GESGAGKT) contributes to the ATP binding site. Actin-binding stretches follow at residues 667–689 (LTKLMTTLRNTNPNFVRCIIPNH) and 768–782 (RIGQSKIFFRTGVLA). The IQ domain maps to 792 to 821 (ITDVIIAFQAQCRGYLARKAFAKRQQQLTA). The rodlike tail (S2 and LMM domains) stretch occupies residues 850-1979 (LLQVTRQEEE…DGDFNGKASE (1130 aa)). Residues 850–1979 (LLQVTRQEEE…DGDFNGKASE (1130 aa)) are a coiled coil. Disordered stretches follow at residues 1130–1150 (QEDLESEKAARNKAEKQKRDL), 1709–1736 (RKQADLEKEEMAEELASANSGRTSLQDE), and 1891–1979 (QLEE…KASE). Basic and acidic residues predominate over residues 1135–1150 (SEKAARNKAEKQKRDL). Over residues 1968–1979 (GRDGDFNGKASE) the composition is skewed to basic and acidic residues.

This sequence belongs to the TRAFAC class myosin-kinesin ATPase superfamily. Myosin family. Muscle myosin is a hexameric protein that consists of 2 heavy chain subunits (MHC), 2 alkali light chain subunits (MLC) and 2 regulatory light chain subunits (MLC-2).

It localises to the cytoplasm. The protein resides in the myofibril. Muscle contraction. This chain is Myosin-11 (MYH11), found in Gallus gallus (Chicken).